A 195-amino-acid polypeptide reads, in one-letter code: MNLIPTVIETTNRGERAYDIYSRLLKDRIIMLGSQIDDNVANSIVSQLLFLQAQDSEKDIYLYINSPGGSVTAGFAIYDTIQHIKPDVQTICIGMAASMGSFLLAAGAKGKRFALPNAEVMIHQPLGGAQGQATEIEIAANHILKTREKLNRILSERTGQSIEKIQKDTDRDNFLTAEEAKEYGLIDEVMVPETK.

Ser-98 acts as the Nucleophile in catalysis. His-123 is an active-site residue.

This sequence belongs to the peptidase S14 family. Fourteen ClpP subunits assemble into 2 heptameric rings which stack back to back to give a disk-like structure with a central cavity, resembling the structure of eukaryotic proteasomes.

The protein resides in the cytoplasm. It catalyses the reaction Hydrolysis of proteins to small peptides in the presence of ATP and magnesium. alpha-casein is the usual test substrate. In the absence of ATP, only oligopeptides shorter than five residues are hydrolyzed (such as succinyl-Leu-Tyr-|-NHMec, and Leu-Tyr-Leu-|-Tyr-Trp, in which cleavage of the -Tyr-|-Leu- and -Tyr-|-Trp bonds also occurs).. In terms of biological role, cleaves peptides in various proteins in a process that requires ATP hydrolysis. Has a chymotrypsin-like activity. Plays a major role in the degradation of misfolded proteins. The polypeptide is ATP-dependent Clp protease proteolytic subunit (Staphylococcus aureus (strain Mu3 / ATCC 700698)).